Consider the following 488-residue polypeptide: Bifunctional protein HldE (488 aa).

Residues 1 to 331 are ribokinase; that stretch reads MTELSALVER…VALHREDLTL (331 aa). 206–209 lines the ATP pocket; sequence NRKE. Residue D276 is part of the active site. The interval 358–488 is cytidylyltransferase; sequence FTNGCFDLLH…TNTIKKMNGN (131 aa).

In the N-terminal section; belongs to the carbohydrate kinase PfkB family. It in the C-terminal section; belongs to the cytidylyltransferase family. Homodimer.

The catalysed reaction is D-glycero-beta-D-manno-heptose 7-phosphate + ATP = D-glycero-beta-D-manno-heptose 1,7-bisphosphate + ADP + H(+). The enzyme catalyses D-glycero-beta-D-manno-heptose 1-phosphate + ATP + H(+) = ADP-D-glycero-beta-D-manno-heptose + diphosphate. The protein operates within nucleotide-sugar biosynthesis; ADP-L-glycero-beta-D-manno-heptose biosynthesis; ADP-L-glycero-beta-D-manno-heptose from D-glycero-beta-D-manno-heptose 7-phosphate: step 1/4. Its pathway is nucleotide-sugar biosynthesis; ADP-L-glycero-beta-D-manno-heptose biosynthesis; ADP-L-glycero-beta-D-manno-heptose from D-glycero-beta-D-manno-heptose 7-phosphate: step 3/4. Its function is as follows. Catalyzes the phosphorylation of D-glycero-D-manno-heptose 7-phosphate at the C-1 position to selectively form D-glycero-beta-D-manno-heptose-1,7-bisphosphate. Catalyzes the ADP transfer from ATP to D-glycero-beta-D-manno-heptose 1-phosphate, yielding ADP-D-glycero-beta-D-manno-heptose. The polypeptide is Bifunctional protein HldE (Paramagnetospirillum magneticum (strain ATCC 700264 / AMB-1) (Magnetospirillum magneticum)).